We begin with the raw amino-acid sequence, 171 residues long: Ribosome-binding factor A (171 aa).

Over residues valine 126 to proline 138 the composition is skewed to basic and acidic residues. The segment at valine 126–aspartate 171 is disordered.

The protein belongs to the RbfA family. Monomer. Binds 30S ribosomal subunits, but not 50S ribosomal subunits or 70S ribosomes.

The protein localises to the cytoplasm. Functionally, one of several proteins that assist in the late maturation steps of the functional core of the 30S ribosomal subunit. Associates with free 30S ribosomal subunits (but not with 30S subunits that are part of 70S ribosomes or polysomes). Required for efficient processing of 16S rRNA. May interact with the 5'-terminal helix region of 16S rRNA. This Mycobacterium sp. (strain JLS) protein is Ribosome-binding factor A.